A 290-amino-acid polypeptide reads, in one-letter code: MTDHSEFDSVSGKTTTGHEWDGIKELNTPLPRWWVICFYLTIVWAIGYWIVYPAWPLISSNTTGLFGYSSRADVAVELANLEKIRGDKMAALGAASLADVEKDPALLALARAKGKTVFGDNCAPCHGSGGAGAKGFPNLNDDDWLWGGTLDQIMQTIQFGARSGHAKTHEGQMLAFGKDGVLKGDEIVTVANYVRSLSGLPTRKGYDAAKGEKIFVENCVACHGDGGKGNQEMGAPNLTDKIWLYGSDEAALIETISQGRAGVMPAWEGRLDPSTIKAMAVYVHSLGGGK.

Topologically, residues 1-32 (MTDHSEFDSVSGKTTTGHEWDGIKELNTPLPR) are cytoplasmic. The chain crosses the membrane as a helical span at residues 33–53 (WWVICFYLTIVWAIGYWIVYP). The Periplasmic segment spans residues 54–290 (AWPLISSNTT…VYVHSLGGGK (237 aa)). Cytochrome c domains follow at residues 109–198 (LARA…RSLS) and 206–287 (YDAA…HSLG). 8 residues coordinate heme c: C122, C125, H126, M173, C219, C222, H223, and M264.

It belongs to the CcoP / FixP family. Component of the cbb3-type cytochrome c oxidase at least composed of FixN, FixO, FixQ and FixP. Requires heme c as cofactor.

It is found in the cell inner membrane. It functions in the pathway energy metabolism; oxidative phosphorylation. C-type cytochrome. Part of the cbb3-type cytochrome c oxidase complex. FixP subunit is required for transferring electrons from donor cytochrome c via its heme groups to FixO subunit. From there, electrons are shuttled to the catalytic binuclear center of FixN subunit where oxygen reduction takes place. The complex also functions as a proton pump. The protein is Cbb3-type cytochrome c oxidase subunit FixP of Bradyrhizobium diazoefficiens (strain JCM 10833 / BCRC 13528 / IAM 13628 / NBRC 14792 / USDA 110).